The following is an 886-amino-acid chain: Putative leucine-rich repeat receptor-like serine/threonine-protein kinase At2g14440 (886 aa).

A signal peptide spans 1–23 (METRSKLMLLACATFSIISLVKS). Topologically, residues 24-528 (QNQQGFISLY…KHQPKSWLVA (505 aa)) are extracellular. Asparagine 49, asparagine 69, asparagine 232, asparagine 236, asparagine 259, asparagine 292, asparagine 434, asparagine 447, asparagine 458, and asparagine 471 each carry an N-linked (GlcNAc...) asparagine glycan. 4 LRR repeats span residues 413-436 (RIISLDLSSSGLTGVITPSIQNLT), 437-460 (MLRELDLSNNNLTGVIPPSLQNLT), 461-483 (MLRELDLSNNNLTGEVPEFLATI), and 485-507 (PLLVIHLRGNNLRGSVPQALQDR). The chain crosses the membrane as a helical span at residues 529-549 (IVASISCVAVTIIVLVLIFIF). The Cytoplasmic segment spans residues 550–886 (RRRKSSTRKV…TFISDIPSAR (337 aa)). The Protein kinase domain occupies 581–850 (NNFEVVLGKG…NMTRVAHELN (270 aa)). Residues 587–595 (LGKGGFGVV) and lysine 608 each bind ATP. Tyrosine 653 carries the post-translational modification Phosphotyrosine. Aspartate 705 acts as the Proton acceptor in catalysis. Serine 739 carries the phosphoserine modification. Phosphothreonine is present on residues threonine 740 and threonine 745. Tyrosine 753 is subject to Phosphotyrosine. Residues 863–886 (SQDQNSSKSSGHTVTFISDIPSAR) form a disordered region. Residues 865–878 (DQNSSKSSGHTVTF) show a composition bias toward polar residues.

It belongs to the protein kinase superfamily. Ser/Thr protein kinase family.

It is found in the cell membrane. It catalyses the reaction L-seryl-[protein] + ATP = O-phospho-L-seryl-[protein] + ADP + H(+). The enzyme catalyses L-threonyl-[protein] + ATP = O-phospho-L-threonyl-[protein] + ADP + H(+). In Arabidopsis thaliana (Mouse-ear cress), this protein is Putative leucine-rich repeat receptor-like serine/threonine-protein kinase At2g14440.